We begin with the raw amino-acid sequence, 634 residues long: 1-deoxy-D-xylulose-5-phosphate synthase (634 aa).

Residues H74 and 115 to 117 each bind thiamine diphosphate; that span reads AHS. A Mg(2+)-binding site is contributed by D146. Residues 147–148, N176, Y283, and E365 each bind thiamine diphosphate; that span reads GA. N176 contacts Mg(2+).

Belongs to the transketolase family. DXPS subfamily. Homodimer. The cofactor is Mg(2+). Requires thiamine diphosphate as cofactor.

The catalysed reaction is D-glyceraldehyde 3-phosphate + pyruvate + H(+) = 1-deoxy-D-xylulose 5-phosphate + CO2. It functions in the pathway metabolic intermediate biosynthesis; 1-deoxy-D-xylulose 5-phosphate biosynthesis; 1-deoxy-D-xylulose 5-phosphate from D-glyceraldehyde 3-phosphate and pyruvate: step 1/1. Catalyzes the acyloin condensation reaction between C atoms 2 and 3 of pyruvate and glyceraldehyde 3-phosphate to yield 1-deoxy-D-xylulose-5-phosphate (DXP). In Burkholderia lata (strain ATCC 17760 / DSM 23089 / LMG 22485 / NCIMB 9086 / R18194 / 383), this protein is 1-deoxy-D-xylulose-5-phosphate synthase.